Consider the following 93-residue polypeptide: Large ribosomal subunit protein uL23cz/uL23cy (93 aa).

It belongs to the universal ribosomal protein uL23 family. As to quaternary structure, part of the 50S ribosomal subunit.

The protein localises to the plastid. Its subcellular location is the chloroplast. Binds to 23S rRNA. In Coffea arabica (Arabian coffee), this protein is Large ribosomal subunit protein uL23cz/uL23cy (rpl23-A).